The sequence spans 298 residues: Tritrans,polycis-undecaprenyl-diphosphate synthase (geranylgeranyl-diphosphate specific) (298 aa).

Asp35 is a catalytic residue. Mg(2+) is bound at residue Asp35. Substrate is bound by residues 36–39 (GNRR), Arg48, His52, and 80–82 (STE). Asn83 serves as the catalytic Proton acceptor. Substrate-binding positions include Phe84, Arg86, Arg208, and 214–216 (RIS).

Belongs to the UPP synthase family. In terms of assembly, homodimer. Mg(2+) is required as a cofactor.

The catalysed reaction is geranylgeranyl diphosphate + 7 isopentenyl diphosphate = tri-trans,hepta-cis-undecaprenyl diphosphate + 7 diphosphate. In terms of biological role, catalyzes the sequential condensation of isopentenyl diphosphate (IPP) with geranylgeranyl diphosphate (GGPP) to yield (2Z,6Z,10Z,14Z,18Z,22Z,26Z,30E,34E,38E)-undecaprenyl diphosphate (tritrans,heptacis-UPP). It is probably the precursor of glycosyl carrier lipids. In Methanosarcina mazei (strain ATCC BAA-159 / DSM 3647 / Goe1 / Go1 / JCM 11833 / OCM 88) (Methanosarcina frisia), this protein is Tritrans,polycis-undecaprenyl-diphosphate synthase (geranylgeranyl-diphosphate specific).